Reading from the N-terminus, the 281-residue chain is Probable endonuclease 4 (281 aa).

Positions 69, 109, 145, 179, 182, 216, 229, 231, and 261 each coordinate Zn(2+).

The protein belongs to the AP endonuclease 2 family. It depends on Zn(2+) as a cofactor.

It carries out the reaction Endonucleolytic cleavage to 5'-phosphooligonucleotide end-products.. Endonuclease IV plays a role in DNA repair. It cleaves phosphodiester bonds at apurinic or apyrimidinic (AP) sites, generating a 3'-hydroxyl group and a 5'-terminal sugar phosphate. This Chlorobaculum parvum (strain DSM 263 / NCIMB 8327) (Chlorobium vibrioforme subsp. thiosulfatophilum) protein is Probable endonuclease 4.